The chain runs to 487 residues: Probable cobyric acid synthase (487 aa).

Residues 246–431 (LVRIAVIRLP…LHGLFMVPAA (186 aa)) form the GATase cobBQ-type domain. C325 functions as the Nucleophile in the catalytic mechanism. H423 is a catalytic residue.

It belongs to the CobB/CobQ family. CobQ subfamily.

It functions in the pathway cofactor biosynthesis; adenosylcobalamin biosynthesis. In terms of biological role, catalyzes amidations at positions B, D, E, and G on adenosylcobyrinic A,C-diamide. NH(2) groups are provided by glutamine, and one molecule of ATP is hydrogenolyzed for each amidation. The protein is Probable cobyric acid synthase of Methanosphaerula palustris (strain ATCC BAA-1556 / DSM 19958 / E1-9c).